The sequence spans 1020 residues: Phosphatidylinositol 3-kinase VPS34 (1020 aa).

The C2 PI3K-type domain maps to 49–210 (LSTKFEDPTV…NWLDKMVLPK (162 aa)). One can recognise a PIK helical domain in the interval 331-577 (DKELKPTPQL…DGPIKIYMDI (247 aa)). The PI3K/PI4K catalytic domain occupies 666-1004 (YPEESSVFKS…LINDSVNAFL (339 aa)). A G-loop region spans residues 672-678 (VFKSSLA). Residues 873 to 881 (GVGDRHLDN) form a catalytic loop region. Positions 892 to 913 (HADFGYILGRDPKPFPPLMKLP) are activation loop.

It belongs to the PI3/PI4-kinase family. As to quaternary structure, component of the autophagy-specific VPS34 PI3-kinase complex I composed of at least VPS15, VPS30, VPS34, and of the VPS34 PI3-kinase complex II composed of VPS15, VPS30, VPS34 and VPS38. Interacts with VMNA7. Post-translationally, autophosphorylated.

It is found in the golgi apparatus. Its subcellular location is the trans-Golgi network membrane. It localises to the endosome membrane. The catalysed reaction is a 1,2-diacyl-sn-glycero-3-phospho-(1D-myo-inositol) + ATP = a 1,2-diacyl-sn-glycero-3-phospho-(1D-myo-inositol-3-phosphate) + ADP + H(+). Its function is as follows. Multifunctional phosphatidylinositol 3-kinase involved in acidification of vacuoles, pH-dependent cell growth, and autophagocytosis. Plays an important role in protein transport and virulence. Component of the autophagy-specific VPS34 PI3-kinase complex I essential to recruit the ATG8-phosphatidylinositol conjugate and the ATG12-ATG5 conjugate to the pre-autophagosomal structure. Also involved in endosome-to-Golgi retrograde transport as part of the VPS34 PI3-kinase complex II. This second complex is required for the endosome-to-Golgi retrieval of PEP1 and KEX2, and the recruitment of VPS5 and VPS7, two components of the retromer complex, to endosomal membranes (probably through the synthesis of a specific pool of phosphatidylinositol 3-phosphate recruiting the retromer to the endosomes). Finally, it might also be involved in ethanol tolerance and cell wall integrity. This is Phosphatidylinositol 3-kinase VPS34 from Candida albicans (Yeast).